A 115-amino-acid chain; its full sequence is NADH-ubiquinone oxidoreductase chain 3 (115 aa).

3 helical membrane-spanning segments follow: residues 3–23 (LMITLLTNTMLTSLMVLIAFW), 55–75 (FFLVAITFLLFDLEIALLLPL), and 86–106 (LTLLMSFMLIILLAIGLAYEW).

This sequence belongs to the complex I subunit 3 family. As to quaternary structure, core subunit of respiratory chain NADH dehydrogenase (Complex I) which is composed of 45 different subunits. Interacts with TMEM186. Interacts with TMEM242.

The protein resides in the mitochondrion inner membrane. The catalysed reaction is a ubiquinone + NADH + 5 H(+)(in) = a ubiquinol + NAD(+) + 4 H(+)(out). Its function is as follows. Core subunit of the mitochondrial membrane respiratory chain NADH dehydrogenase (Complex I) which catalyzes electron transfer from NADH through the respiratory chain, using ubiquinone as an electron acceptor. Essential for the catalytic activity of complex I. The chain is NADH-ubiquinone oxidoreductase chain 3 from Loxodonta africana (African elephant).